Here is a 604-residue protein sequence, read N- to C-terminus: MAELSEQVQNLSINDNNENGYVPPHLRGKPRSARNNSSNYNNNNGGYNGGRGGGSFFSNNRRGGYGNGGFFGGNNGGSRSNGRSGGRWIDGKHVPAPRNEKAEIAIFGVPEDPNFQSSGINFDNYDDIPVDASGKDVPEPITEFTSPPLDGLLLENIKLARFTKPTPVQKYSVPIVANGRDLMACAQTGSGKTGGFLFPVLSESFKTGPSPQPESQGSFYQRKAYPTAVIMAPTRELATQIFDEAKKFTYRSWVKACVVYGGSPIGNQLREIERGCDLLVATPGRLNDLLERGKISLANVKYLVLDEADRMLDMGFEPQIRHIVEDCDMTPVGERQTLMFSATFPADIQHLARDFLSDYIFLSVGRVGSTSENITQKVLYVENQDKKSALLDLLSASTDGLTLIFVETKRMADQLTDFLIMQNFRATAIHGDRTQSERERALAAFRSGAATLLVATAVAARGLDIPNVTHVINYDLPSDVDDYVHRIGRTGRAGNTGLATAFFNSENSNIVKGLHEILTEANQEVPSFLKDAMMSAPGSRSNSRRGGFGRNNNRDYRKAGGASAGGWGSSRSRDNSFRGGSGWGSDSKSSGWGNSGGSNNSSWW.

Residues 1-19 are compositionally biased toward polar residues; that stretch reads MAELSEQVQNLSINDNNEN. The disordered stretch occupies residues 1 to 55; sequence MAELSEQVQNLSINDNNENGYVPPHLRGKPRSARNNSSNYNNNNGGYNGGRGGGS. Ala2 carries the N-acetylalanine modification. Residues 34–45 show a composition bias toward low complexity; the sequence is RNNSSNYNNNNG. Over residues 46–55 the composition is skewed to gly residues; sequence GYNGGRGGGS. At Arg51 the chain carries Omega-N-methylarginine. A Dimethylated arginine; alternate modification is found at Arg62. Arg62 carries the omega-N-methylarginine; alternate modification. Positions 67–76 are enriched in gly residues; sequence NGGFFGGNNG. The segment at 67–94 is disordered; the sequence is NGGFFGGNNGGSRSNGRSGGRWIDGKHV. A Q motif motif is present at residues 142–170; that stretch reads TEFTSPPLDGLLLENIKLARFTKPTPVQK. Residue Lys158 forms a Glycyl lysine isopeptide (Lys-Gly) (interchain with G-Cter in ubiquitin) linkage. Residues 173 to 362 enclose the Helicase ATP-binding domain; it reads VPIVANGRDL…RDFLSDYIFL (190 aa). Residue 186 to 193 participates in ATP binding; that stretch reads AQTGSGKT. Phosphoserine occurs at positions 215, 218, and 263. The DEAD box signature appears at 306–309; it reads DEAD. The Helicase C-terminal domain occupies 373-533; that stretch reads NITQKVLYVE…EVPSFLKDAM (161 aa). The segment at 533–604 is disordered; the sequence is MMSAPGSRSN…SGGSNNSSWW (72 aa). Phosphoserine occurs at positions 535, 539, and 543. Arg545 carries the post-translational modification Dimethylated arginine; alternate. Arg545 carries the post-translational modification Omega-N-methylarginine; alternate. Ser572 and Ser576 each carry phosphoserine. Arg578 is subject to Omega-N-methylarginine. The segment covering 584 to 604 has biased composition (low complexity); it reads GSDSKSSGWGNSGGSNNSSWW. The residue at position 598 (Ser598) is a Phosphoserine.

It belongs to the DEAD box helicase family. DDX3/DED1 subfamily. In terms of assembly, interacts with the L-A virus GAG protein and the whole L-A virus particles.

It is found in the cytoplasm. The catalysed reaction is ATP + H2O = ADP + phosphate + H(+). ATP-binding RNA helicase involved in translation initiation. Remodels RNA in response to ADP and ATP concentrations by facilitating disruption, but also formation of RNA duplexes. Has weak ATP-dependent affinity for dsRNA, but strong ATP-dependent affinity for ssRNA. Acts as a virus host factor involved in the replication of the MBV and the L-A viruses by promoting the negative-strand RNA synthesis. May be involved in recognition of the preinitiation complex and DNA binding of the RNA polymerase III and play a role in mRNA splicing. The chain is ATP-dependent RNA helicase DED1 from Saccharomyces cerevisiae (strain ATCC 204508 / S288c) (Baker's yeast).